The primary structure comprises 300 residues: Tyrosine recombinase XerC (300 aa).

In terms of domain architecture, Core-binding (CB) spans 4–90 (VALSLDVSRF…ALRSFFDWLV (87 aa)). Positions 111 to 290 (HLPKNIDVDD…DFQHLASVYD (180 aa)) constitute a Tyr recombinase domain. Residues Arg150, Lys174, His242, Arg245, and His268 contribute to the active site. Catalysis depends on Tyr277, which acts as the O-(3'-phospho-DNA)-tyrosine intermediate.

It belongs to the 'phage' integrase family. XerC subfamily. Forms a cyclic heterotetrameric complex composed of two molecules of XerC and two molecules of XerD, in which XerC interacts with XerD via its C-terminal region, XerD interacts with XerC via its C-terminal region and so on.

The protein localises to the cytoplasm. Its activity is regulated as follows. FtsK may regulate the catalytic switch between XerC and XerD in the heterotetrameric complex during the two steps of the recombination process. Functionally, site-specific tyrosine recombinase, which acts by catalyzing the cutting and rejoining of the recombining DNA molecules. Binds cooperatively to specific DNA consensus sequences that are separated from XerD binding sites by a short central region, forming the heterotetrameric XerC-XerD complex that recombines DNA substrates. The complex is essential to convert dimers of the bacterial chromosome into monomers to permit their segregation at cell division. It also contributes to the segregational stability of plasmids. In the complex XerC specifically exchanges the top DNA strands. The polypeptide is Tyrosine recombinase XerC (Salmonella typhi).